The primary structure comprises 480 residues: Ribulose bisphosphate carboxylase large chain (480 aa).

The propeptide occupies 1 to 2 (MS). Residue P3 is modified to N-acetylproline. K14 is subject to N6,N6,N6-trimethyllysine. Residues N123 and T173 each contribute to the substrate site. Residue K175 is the Proton acceptor of the active site. K177 is a binding site for substrate. Residues K201, D203, and E204 each coordinate Mg(2+). At K201 the chain carries N6-carboxylysine. The active-site Proton acceptor is the H294. Substrate is bound by residues R295, H327, and S379.

The protein belongs to the RuBisCO large chain family. Type I subfamily. As to quaternary structure, heterohexadecamer of 8 large chains and 8 small chains; disulfide-linked. The disulfide link is formed within the large subunit homodimers. The cofactor is Mg(2+). Post-translationally, the disulfide bond which can form in the large chain dimeric partners within the hexadecamer appears to be associated with oxidative stress and protein turnover.

The protein resides in the plastid. It localises to the chloroplast. The enzyme catalyses 2 (2R)-3-phosphoglycerate + 2 H(+) = D-ribulose 1,5-bisphosphate + CO2 + H2O. The catalysed reaction is D-ribulose 1,5-bisphosphate + O2 = 2-phosphoglycolate + (2R)-3-phosphoglycerate + 2 H(+). Its function is as follows. RuBisCO catalyzes two reactions: the carboxylation of D-ribulose 1,5-bisphosphate, the primary event in carbon dioxide fixation, as well as the oxidative fragmentation of the pentose substrate in the photorespiration process. Both reactions occur simultaneously and in competition at the same active site. The polypeptide is Ribulose bisphosphate carboxylase large chain (Alluaudia procera (Madagascan ocotillo)).